Here is a 661-residue protein sequence, read N- to C-terminus: Immunoglobulin-like domain-containing receptor 2 (661 aa).

The first 35 residues, 1 to 35, serve as a signal peptide directing secretion; sequence MPAFPTLDLDGKLGKMDRVVLGWTAVFWLTAMVEG. Positions 36–177 constitute an Ig-like V-type domain; that stretch reads LQVTVPDKKK…LEGKNEDSVE (142 aa). Over 36-201 the chain is Lumenal; the sequence is LQVTVPDKKK…PSFAVEIMPE (166 aa). Cysteines 57 and 160 form a disulfide. Residues 202–222 traverse the membrane as a helical segment; it reads WVFVGLVILGIFLFFVLVGIC. The Cytoplasmic segment spans residues 223–661; it reads WCQCCPHSCC…DFPTRMSLVV (439 aa). Disordered stretches follow at residues 288 to 310, 410 to 429, and 453 to 661; these read LMDK…HSVR, EDRE…MLSR, and QRSR…SLVV. 2 stretches are compositionally biased toward basic and acidic residues: residues 410 to 428 and 463 to 478; these read EDRE…EMLS and HEAR…ESRA. Phosphoserine is present on serine 487. Over residues 491–506 the composition is skewed to basic and acidic residues; sequence YYGRGRSREPPGDGER. The residue at position 559 (arginine 559) is an Omega-N-methylarginine. Residue serine 594 is modified to Phosphoserine. Residues 595-607 show a composition bias toward acidic residues; that stretch reads EGEDEDDAADEDA. Basic and acidic residues predominate over residues 628–639; sequence RGRDLSFHSNSE.

This sequence belongs to the immunoglobulin superfamily. LISCH7 family. In terms of assembly, interacts with MARVELD2 and OCLN. Interacts with P4HB and HSPA5; the interaction with HSPA5 stabilizes ILDR2 expression. Interacts (via C-terminus) with TRA2A, TRA2B and SRSF1. Expressed in epithelial tissues, mainly in liver, kidney and colon.

Its subcellular location is the endoplasmic reticulum membrane. The protein resides in the cell junction. It is found in the tight junction. It localises to the nucleus. In terms of biological role, may be involved in ER stress pathways with effects on lipid homeostasis and insulin secretion. With ILDR1 and LSR, involved in the maintain of the epithelial barrier function through the recruitment of MARVELD2/tricellulin to tricellular tight junctions. Also functions as a B7-like protein family member expressed on immune cells and inflamed tissue and with T-cell inhibitory activity. In the inner ear, may regulate alternative pre-mRNA splicing via binding to TRA2A, TRA2B and SRSF1. This is Immunoglobulin-like domain-containing receptor 2 from Mus musculus (Mouse).